The sequence spans 70 residues: MAILRADELRGMSMEELKEKLVELKRELLKERASKAVAGAPSNPGRMREIRRTIARILTIMNEKKRMTSQ.

This sequence belongs to the universal ribosomal protein uL29 family.

This chain is Large ribosomal subunit protein uL29 (rpl29), found in Methanocaldococcus jannaschii (strain ATCC 43067 / DSM 2661 / JAL-1 / JCM 10045 / NBRC 100440) (Methanococcus jannaschii).